The sequence spans 242 residues: Orotidine 5'-phosphate decarboxylase (242 aa).

Substrate contacts are provided by residues Asp-16, Lys-37, 64-73 (DLKFHDIPNT), Thr-128, Arg-190, Gln-199, Gly-219, and Arg-220. Lys-66 acts as the Proton donor in catalysis.

This sequence belongs to the OMP decarboxylase family. Type 1 subfamily. As to quaternary structure, homodimer.

It catalyses the reaction orotidine 5'-phosphate + H(+) = UMP + CO2. It functions in the pathway pyrimidine metabolism; UMP biosynthesis via de novo pathway; UMP from orotate: step 2/2. In terms of biological role, catalyzes the decarboxylation of orotidine 5'-monophosphate (OMP) to uridine 5'-monophosphate (UMP). This Prochlorococcus marinus (strain MIT 9312) protein is Orotidine 5'-phosphate decarboxylase.